The sequence spans 476 residues: Cysteine--tRNA ligase (476 aa).

Zn(2+) is bound at residue Cys-29. Positions Pro-31–His-41 match the 'HIGH' region motif. Cys-209, His-234, and Glu-238 together coordinate Zn(2+). The 'KMSKS' region motif lies at Lys-266 to Ser-270. Lys-269 is an ATP binding site.

The protein belongs to the class-I aminoacyl-tRNA synthetase family. The cofactor is Zn(2+).

It is found in the cytoplasm. It carries out the reaction tRNA(Cys) + L-cysteine + ATP = L-cysteinyl-tRNA(Cys) + AMP + diphosphate. The protein is Cysteine--tRNA ligase of Thermococcus onnurineus (strain NA1).